The primary structure comprises 1365 residues: DNA-directed RNA polymerase subunit beta' (1365 aa).

Residues cysteine 249, cysteine 316, cysteine 323, and cysteine 326 each coordinate Zn(2+).

Belongs to the RNA polymerase beta' chain family. RpoC2 subfamily. In cyanobacteria the RNAP catalytic core is composed of 2 alpha, 1 beta, 1 beta', 1 gamma and 1 omega subunit. When a sigma factor is associated with the core the holoenzyme is formed, which can initiate transcription. Zn(2+) serves as cofactor.

The enzyme catalyses RNA(n) + a ribonucleoside 5'-triphosphate = RNA(n+1) + diphosphate. In terms of biological role, DNA-dependent RNA polymerase catalyzes the transcription of DNA into RNA using the four ribonucleoside triphosphates as substrates. The protein is DNA-directed RNA polymerase subunit beta' of Synechococcus sp. (strain CC9311).